The primary structure comprises 67 residues: MPKLKTKSSVKKRFKITATGKVLAGPGKKRHNLSARSQKAKRQNRGSQVLTHADGLTVKQWAPYGLN.

Residues 22–52 form a disordered region; it reads VLAGPGKKRHNLSARSQKAKRQNRGSQVLTH. Basic residues predominate over residues 27–44; the sequence is GKKRHNLSARSQKAKRQN.

This sequence belongs to the bacterial ribosomal protein bL35 family.

This Granulibacter bethesdensis (strain ATCC BAA-1260 / CGDNIH1) protein is Large ribosomal subunit protein bL35.